A 370-amino-acid chain; its full sequence is Dual-specificity RNA methyltransferase RlmN (370 aa).

The Proton acceptor role is filled by Glu93. In terms of domain architecture, Radical SAM core spans 99-337 (EEGRGTLCVS…VTTVRKTRGD (239 aa)). The cysteines at positions 106 and 343 are disulfide-linked. Cys113, Cys117, and Cys120 together coordinate [4Fe-4S] cluster. S-adenosyl-L-methionine is bound by residues 167-168 (GE), Ser199, 221-223 (SLH), and Asn300. The S-methylcysteine intermediate role is filled by Cys343.

Belongs to the radical SAM superfamily. RlmN family. [4Fe-4S] cluster serves as cofactor.

The protein resides in the cytoplasm. It carries out the reaction adenosine(2503) in 23S rRNA + 2 reduced [2Fe-2S]-[ferredoxin] + 2 S-adenosyl-L-methionine = 2-methyladenosine(2503) in 23S rRNA + 5'-deoxyadenosine + L-methionine + 2 oxidized [2Fe-2S]-[ferredoxin] + S-adenosyl-L-homocysteine. The enzyme catalyses adenosine(37) in tRNA + 2 reduced [2Fe-2S]-[ferredoxin] + 2 S-adenosyl-L-methionine = 2-methyladenosine(37) in tRNA + 5'-deoxyadenosine + L-methionine + 2 oxidized [2Fe-2S]-[ferredoxin] + S-adenosyl-L-homocysteine. In terms of biological role, specifically methylates position 2 of adenine 2503 in 23S rRNA and position 2 of adenine 37 in tRNAs. m2A2503 modification seems to play a crucial role in the proofreading step occurring at the peptidyl transferase center and thus would serve to optimize ribosomal fidelity. The sequence is that of Dual-specificity RNA methyltransferase RlmN from Francisella tularensis subsp. tularensis (strain WY96-3418).